The chain runs to 309 residues: Calcium homeostasis modulator protein 5 (309 aa).

At 1-15 (MDAFQSILKFFLNQK) the chain is on the cytoplasmic side. A helical membrane pass occupies residues 16–37 (TAIGYSFMALLTVGSERLFSLV). The a 1,2-diacyl-sn-glycero-3-phosphate site is built by Arg-32 and Val-37. Residues 38 to 45 (AFKCPCSV) are Extracellular-facing. 3 disulfide bridges follow: Cys-41–Cys-127, Cys-43–Cys-158, and Cys-142–Cys-149. The helical transmembrane segment at 46–70 (ENTAYGLVFLFAPAWVLLILGFFLN) threads the bilayer. At 71 to 99 (NKAWRLFTGCCMNPKKIFPRRRCCRFFYV) the chain is on the cytoplasmic side. A helical membrane pass occupies residues 100 to 129 (LGHIILSSLVAPVMWLSVALLNGTFYECAM). Asn-121 serves as a coordination point for a 1,2-diacyl-sn-glycero-3-phosphate. Residues 130–174 (SGTRSTRLLEMICKGKPKECWEELHKVSCGKSSMAAMESEEVRLS) lie on the Extracellular side of the membrane. A helical membrane pass occupies residues 175–200 (LQAQSQILGWCLICSASFLSLLTTCY). Residues 201 to 309 (ARCRSKVSYL…MILVGTAQSL (109 aa)) are Cytoplasmic-facing. Arg-202 lines the a 1,2-diacyl-sn-glycero-3-phosphate pocket.

It belongs to the CALHM family. As to quaternary structure, oligomerizes to form undecameric cone-shaped channels.

The protein resides in the membrane. Functionally, may assemble to form large pore channels with gating and ion conductance likely regulated by membrane lipids. This chain is Calcium homeostasis modulator protein 5, found in Mus musculus (Mouse).